A 720-amino-acid chain; its full sequence is Calpain-12 (720 aa).

The Calpain catalytic domain maps to 45-341 (LFRDPCFPAG…FNTVQICSLS (297 aa)). Catalysis depends on residues cysteine 105, histidine 259, and asparagine 283. Positions 342-541 (PEVLGPSPAG…DDVISADLDA (200 aa)) are domain III. Residues 393 to 403 (DEEEDDDDEEG) are compositionally biased toward acidic residues. Residues 393-415 (DEEEDDDDEEGPWGGWGAAGARG) form a disordered region. The tract at residues 542-720 (LQAPYKPLEL…KQWSEVATFS (179 aa)) is domain IV. Residues 621–656 (GHLMSWQATFDKFDEDASGTMNSCELRLALTAAGFH) form the EF-hand domain. Aspartate 634, aspartate 636, serine 638, threonine 640, and glutamate 645 together coordinate Ca(2+).

This sequence belongs to the peptidase C2 family. As to expression, expression localized to the cortex of the hair follicle during the anagen phase of hair cycle.

Functionally, calcium-regulated non-lysosomal thiol-protease. The polypeptide is Calpain-12 (Capn12) (Mus musculus (Mouse)).